The primary structure comprises 375 residues: 5-amino-6-(D-ribitylamino)uracil--L-tyrosine 4-hydroxyphenyl transferase 1 (375 aa).

Residues 50–284 (VTYVVNRNIN…AVSRILFHGH (235 aa)) enclose the Radical SAM core domain. Residues Cys-64, Cys-68, and Cys-71 each contribute to the [4Fe-4S] cluster site.

This sequence belongs to the radical SAM superfamily. CofH family. Consists of two subunits, CofG and CofH. It depends on [4Fe-4S] cluster as a cofactor.

It catalyses the reaction 5-amino-6-(D-ribitylamino)uracil + L-tyrosine + S-adenosyl-L-methionine = 5-amino-5-(4-hydroxybenzyl)-6-(D-ribitylimino)-5,6-dihydrouracil + 2-iminoacetate + 5'-deoxyadenosine + L-methionine + H(+). It functions in the pathway cofactor biosynthesis; coenzyme F0 biosynthesis. Functionally, catalyzes the radical-mediated synthesis of 5-amino-5-(4-hydroxybenzyl)-6-(D-ribitylimino)-5,6-dihydrouracil from 5-amino-6-(D-ribitylamino)uracil and L-tyrosine. This is 5-amino-6-(D-ribitylamino)uracil--L-tyrosine 4-hydroxyphenyl transferase 1 from Methanosarcina acetivorans (strain ATCC 35395 / DSM 2834 / JCM 12185 / C2A).